Here is a 1373-residue protein sequence, read N- to C-terminus: DNA-directed RNA polymerase subunit beta (1373 aa).

It belongs to the RNA polymerase beta chain family. In terms of assembly, the RNAP catalytic core consists of 2 alpha, 1 beta, 1 beta' and 1 omega subunit. When a sigma factor is associated with the core the holoenzyme is formed, which can initiate transcription.

It catalyses the reaction RNA(n) + a ribonucleoside 5'-triphosphate = RNA(n+1) + diphosphate. DNA-dependent RNA polymerase catalyzes the transcription of DNA into RNA using the four ribonucleoside triphosphates as substrates. This is DNA-directed RNA polymerase subunit beta from Rickettsia felis (strain ATCC VR-1525 / URRWXCal2) (Rickettsia azadi).